The sequence spans 265 residues: Hydroxyethylthiazole kinase (265 aa).

Residue M43 coordinates substrate. ATP-binding residues include K118 and T165. G192 contacts substrate.

The protein belongs to the Thz kinase family. Mg(2+) serves as cofactor.

The catalysed reaction is 5-(2-hydroxyethyl)-4-methylthiazole + ATP = 4-methyl-5-(2-phosphooxyethyl)-thiazole + ADP + H(+). The protein operates within cofactor biosynthesis; thiamine diphosphate biosynthesis; 4-methyl-5-(2-phosphoethyl)-thiazole from 5-(2-hydroxyethyl)-4-methylthiazole: step 1/1. Its function is as follows. Catalyzes the phosphorylation of the hydroxyl group of 4-methyl-5-beta-hydroxyethylthiazole (THZ). The sequence is that of Hydroxyethylthiazole kinase from Pyrococcus furiosus (strain ATCC 43587 / DSM 3638 / JCM 8422 / Vc1).